The chain runs to 156 residues: uncharacterized protein (156 aa).

The segment covering 1-12 has biased composition (polar residues); sequence MSSRFARSNGNP. Positions 1–27 are disordered; sequence MSSRFARSNGNPNHIRKRNHSPDPIGI. Ser21 is subject to Phosphoserine.

The protein resides in the cytoplasm. The protein localises to the nucleus. This is an uncharacterized protein from Saccharomyces cerevisiae (strain ATCC 204508 / S288c) (Baker's yeast).